Consider the following 263-residue polypeptide: Elongation factor Ts (263 aa).

Positions 82–85 (TDFV) are involved in Mg(2+) ion dislocation from EF-Tu. Residues 221–251 (APPAVVEAPVAETPEPAVAETPEAKPAATES) show a composition bias toward low complexity. The interval 221–263 (APPAVVEAPVAETPEPAVAETPEAKPAATESKPAKSKSAKKKK) is disordered. Residues 254 to 263 (AKSKSAKKKK) are compositionally biased toward basic residues.

This sequence belongs to the EF-Ts family.

It localises to the cytoplasm. Functionally, associates with the EF-Tu.GDP complex and induces the exchange of GDP to GTP. It remains bound to the aminoacyl-tRNA.EF-Tu.GTP complex up to the GTP hydrolysis stage on the ribosome. This is Elongation factor Ts from Cyanothece sp. (strain PCC 7425 / ATCC 29141).